The sequence spans 295 residues: Probable peptidyl-prolyl cis-trans isomerase B (295 aa).

Disordered stretches follow at residues 105-128 (SADKAAKPVKPPRAGKVPTDPATV) and 274-295 (IASGGDDGPPATEVTIESLRLD). The 169-residue stretch at 126–294 (ATVSASMATN…TEVTIESLRL (169 aa)) folds into the PPIase cyclophilin-type domain.

Belongs to the cyclophilin-type PPIase family.

The catalysed reaction is [protein]-peptidylproline (omega=180) = [protein]-peptidylproline (omega=0). PPIases accelerate the folding of proteins. It catalyzes the cis-trans isomerization of proline imidic peptide bonds in oligopeptides. In Mycobacterium leprae (strain TN), this protein is Probable peptidyl-prolyl cis-trans isomerase B (ppiB).